Consider the following 308-residue polypeptide: Mycothiol acetyltransferase (308 aa).

N-acetyltransferase domains follow at residues 8–155 (RDVD…PRLR) and 160–308 (VQVR…RRAR). 1D-myo-inositol 2-(L-cysteinylamino)-2-deoxy-alpha-D-glucopyranoside is bound at residue Glu39. 84 to 86 (LVV) is a binding site for acetyl-CoA. 1D-myo-inositol 2-(L-cysteinylamino)-2-deoxy-alpha-D-glucopyranoside is bound by residues Glu187, Lys226, and Glu240. Residues 244–246 (LGI) and 251–257 (QGLGLGR) each bind acetyl-CoA. 1D-myo-inositol 2-(L-cysteinylamino)-2-deoxy-alpha-D-glucopyranoside is bound at residue Tyr278.

The protein belongs to the acetyltransferase family. MshD subfamily. As to quaternary structure, monomer.

The enzyme catalyses 1D-myo-inositol 2-(L-cysteinylamino)-2-deoxy-alpha-D-glucopyranoside + acetyl-CoA = mycothiol + CoA + H(+). Its function is as follows. Catalyzes the transfer of acetyl from acetyl-CoA to desacetylmycothiol (Cys-GlcN-Ins) to form mycothiol. In Geodermatophilus obscurus (strain ATCC 25078 / DSM 43160 / JCM 3152 / CCUG 61914 / KCC A-0152 / KCTC 9177 / NBRC 13315 / NRRL B-3577 / G-20), this protein is Mycothiol acetyltransferase.